The sequence spans 275 residues: Dermonecrotic toxin SpaSicTox-betaIIA2 (275 aa).

His-5 is an active-site residue. Mg(2+)-binding residues include Glu-25 and Asp-27. His-41 functions as the Nucleophile in the catalytic mechanism. Disulfide bonds link Cys-45-Cys-51 and Cys-47-Cys-190. A Mg(2+)-binding site is contributed by Asp-85.

This sequence belongs to the arthropod phospholipase D family. Class II subfamily. Requires Mg(2+) as cofactor. Expressed by the venom gland.

The protein localises to the secreted. It catalyses the reaction an N-(acyl)-sphingosylphosphocholine = an N-(acyl)-sphingosyl-1,3-cyclic phosphate + choline. The catalysed reaction is an N-(acyl)-sphingosylphosphoethanolamine = an N-(acyl)-sphingosyl-1,3-cyclic phosphate + ethanolamine. The enzyme catalyses a 1-acyl-sn-glycero-3-phosphocholine = a 1-acyl-sn-glycero-2,3-cyclic phosphate + choline. It carries out the reaction a 1-acyl-sn-glycero-3-phosphoethanolamine = a 1-acyl-sn-glycero-2,3-cyclic phosphate + ethanolamine. Dermonecrotic toxins cleave the phosphodiester linkage between the phosphate and headgroup of certain phospholipids (sphingolipid and lysolipid substrates), forming an alcohol (often choline) and a cyclic phosphate. This toxin acts on sphingomyelin (SM). It may also act on ceramide phosphoethanolamine (CPE), lysophosphatidylcholine (LPC) and lysophosphatidylethanolamine (LPE), but not on lysophosphatidylserine (LPS), and lysophosphatidylglycerol (LPG). It acts by transphosphatidylation, releasing exclusively cyclic phosphate products as second products. Induces dermonecrosis, hemolysis, increased vascular permeability, edema, inflammatory response, and platelet aggregation. This is Dermonecrotic toxin SpaSicTox-betaIIA2 from Sicarius patagonicus (Six-eyed sand spider).